The following is a 462-amino-acid chain: Elongation factor 1-alpha (462 aa).

Gly-2 is subject to Blocked amino end (Gly). The tr-type G domain maps to 5 to 242 (KIHINIVVIG…DAILPPSRPT (238 aa)). Residues 14–21 (GHVDSGKS) are G1. 14-21 (GHVDSGKS) contacts GTP. An N6,N6,N6-trimethyllysine modification is found at Lys-36. Lys-55 carries the post-translational modification N6-methyllysine. The G2 stretch occupies residues 70–74 (GITID). N6,N6,N6-trimethyllysine is present on Lys-79. The segment at 91–94 (DAPG) is G3. GTP is bound by residues 91-95 (DAPGH) and 153-156 (NKMD). The tract at residues 153-156 (NKMD) is G4. Positions 194–196 (SGW) are G5. N6,N6,N6-trimethyllysine is present on residues Lys-219 and Lys-318. Glu-374 bears the 5-glutamyl glycerylphosphorylethanolamine mark.

Belongs to the TRAFAC class translation factor GTPase superfamily. Classic translation factor GTPase family. EF-Tu/EF-1A subfamily. The N-terminus is blocked.

It is found in the cytoplasm. In terms of biological role, this protein promotes the GTP-dependent binding of aminoacyl-tRNA to the A-site of ribosomes during protein biosynthesis. In Artemia salina (Brine shrimp), this protein is Elongation factor 1-alpha.